Consider the following 102-residue polypeptide: Major basic nuclear protein 2 (102 aa).

Over residues 1 to 11 the composition is skewed to basic residues; that stretch reads MKAMKATKKAM. Residues 1 to 43 form a disordered region; the sequence is MKAMKATKKAMTKTGLAEALAPKPSSARRIAPPSSRAWPPSAQ. Positions 21–42 are enriched in low complexity; that stretch reads APKPSSARRIAPPSSRAWPPSA.

The protein resides in the nucleus. The sequence is that of Major basic nuclear protein 2 (HCc2) from Crypthecodinium cohnii (Dinoflagellate).